Here is a 243-residue protein sequence, read N- to C-terminus: I/6 autoantigen (243 aa).

Residues 110–145 (LSVEEVDALFNALDSDNRGYVSVDEFMDALYGEEGR) form the EF-hand domain. Residues 166-243 (PSWRMRPTPK…PPKQKAGCGC (78 aa)) are disordered. Over residues 176–196 (PTRKLRQKRKREQGQKRKQGQ) the composition is skewed to basic residues. 6 consecutive repeat copies span residues 181 to 188 (RQKRKREQ), 189 to 196 (GQKRKQGQ), 197 to 204 (RQKQEQGQ), 205 to 212 (RQKREQGQ), 213 to 220 (RQKQEQGQ), and 221 to 228 (KRKRERGG). The segment at 181-228 (RQKRKREQGQKRKQGQRQKQEQGQRQKREQGQRQKQEQGQKRKRERGG) is 6 X 8 AA tandem repeats. Residues 198–220 (QKQEQGQRQKREQGQRQKQEQGQ) show a composition bias toward basic and acidic residues.

It localises to the cytoplasm. It is found in the cytoskeleton. In terms of biological role, microtubule-associated protein that may be involved in cross-linking microtubules. The polypeptide is I/6 autoantigen (Trypanosoma brucei brucei).